Here is a 1308-residue protein sequence, read N- to C-terminus: Limbin (1308 aa).

The first 26 residues, 1-26 (MDPSGSRGRPTWVLAGGLLAVALALG), serve as a signal peptide directing secretion. Residues 27–300 (GRGCLGASSR…VLPHHGLHAA (274 aa)) are Extracellular-facing. Residues 36–76 (RPRWRPLGAQPPRDPQVAPRSGPGLRIPPGRSGAGPESSTQ) are disordered. Residue asparagine 220 is glycosylated (N-linked (GlcNAc...) asparagine). Residues 301–321 (GFFIAFLLSLVLTWAALFLMV) traverse the membrane as a helical segment. Residues 322–1308 (RYQCLKGNML…KKAMRALGMD (987 aa)) are Cytoplasmic-facing. Coiled-coil stretches lie at residues 455–578 (TAEC…ELMD), 636–800 (DQME…DRDQ), and 1001–1113 (ASEM…EADT). Over residues 784–801 (MAARAEQLEGEERDRDQE) the composition is skewed to basic and acidic residues. The interval 784-816 (MAARAEQLEGEERDRDQEGVQSVRQRLKDDAPE) is disordered.

Component of the EvC complex composed of EFCAB7, IQCE, EVC2 and EVC; built from two subcomplexes, EVC2:EVC and EFCAB7:IQCE. Interacts with EVC. Interacts (via N-terminal end) with EFCAB7. Interacts (via N-terminal end) with IQCE. In terms of tissue distribution, found in the heart, placenta, lung, liver, skeletal muscle, kidney and pancreas.

The protein resides in the cell membrane. The protein localises to the cytoplasm. Its subcellular location is the cytoskeleton. It localises to the cilium basal body. It is found in the cell projection. The protein resides in the cilium. The protein localises to the cilium membrane. Its subcellular location is the nucleus. In terms of biological role, component of the EvC complex that positively regulates ciliary Hedgehog (Hh) signaling. Plays a critical role in bone formation and skeletal development. May be involved in early embryonic morphogenesis. The chain is Limbin (EVC2) from Homo sapiens (Human).